The following is a 412-amino-acid chain: L-threonine:uridine-5'-aldehyde transaldolase (412 aa).

Lys229 bears the N6-(pyridoxal phosphate)lysine mark.

This sequence belongs to the SHMT family. Pyridoxal 5'-phosphate is required as a cofactor.

The catalysed reaction is uridine-5'-aldehyde + L-threonine = (5'S,6'S)-C-glycyluridine + acetaldehyde. The protein operates within antibiotic biosynthesis. Functionally, transaldolase involved in the biosynthesis of the capuramycin-type nucleoside antibiotic A-503083. Catalyzes the condensation of L-threonine and uridine-5'-aldehyde to form 5'-C-glycyluridine (GlyU). Forms (5'S,6'S)-GlyU. This chain is L-threonine:uridine-5'-aldehyde transaldolase, found in Streptomyces sp.